Reading from the N-terminus, the 364-residue chain is MAQQTPLYEQHTLCGARMVDFHGWMMPLHYGSQIDEHHAVRTDAGMFDVSHMTIVDLRGSRTREFLRYLLANDVAKLTKSGKALYSGMLNASGGVIDDLIVYYFTEDFFRLVVNSATREKDLSWITQHAEPFGIEITVRDDLSMIAVQGPNAQAKAATLFNDAQRQAVEGMKPFFGVQAGDLFIATTGYTGEAGYEIALPNEKAADFWRALVEAGVKPCGLGARDTLRLEAGMNLYGQEMDETISPLAANMGWTIAWEPADRDFIGREALEAQREHGTEKLVGLVMTEKGVLRNELPVRFTDAQGNQHEGIITSGTFSPTLGYSIALARVPEGIGETAIVQIRNREMPVKVTKPVFVRNGKAVA.

This sequence belongs to the GcvT family. The glycine cleavage system is composed of four proteins: P, T, L and H.

It carries out the reaction N(6)-[(R)-S(8)-aminomethyldihydrolipoyl]-L-lysyl-[protein] + (6S)-5,6,7,8-tetrahydrofolate = N(6)-[(R)-dihydrolipoyl]-L-lysyl-[protein] + (6R)-5,10-methylene-5,6,7,8-tetrahydrofolate + NH4(+). The glycine cleavage system catalyzes the degradation of glycine. The polypeptide is Aminomethyltransferase (Escherichia coli (strain SMS-3-5 / SECEC)).